A 272-amino-acid polypeptide reads, in one-letter code: MFVKSETLELKEEEDVLVLLGSASPALAALTPLSSSADEEEEEEPGASGGARRQRGAEAGQGARGGVAAGAEGCRPARLLGLVHDCKRRPSRARAVSRGAKTAETVQRIKKTRRLKANNRERNRMHNLNAALDALREVLPTFPEDAKLTKIETLRFAHNYIWALTETLRLADHCGGGGGGLPGALFSEAVLLSPGGASAALSSSGDSPSPASTWSCTNSPAPSSSVSSNSTSPYSCTLSPASPAGSDMDYWQPPPPDKHRYAPHLPIARDCI.

Residues 30-69 (LTPLSSSADEEEEEEPGASGGARRQRGAEAGQGARGGVAA) are disordered. Residues 112 to 164 (TRRLKANNRERNRMHNLNAALDALREVLPTFPEDAKLTKIETLRFAHNYIWAL) enclose the bHLH domain. The segment covering 197–239 (ASAALSSSGDSPSPASTWSCTNSPAPSSSVSSNSTSPYSCTLS) has biased composition (low complexity). Residues 197–264 (ASAALSSSGD…PPDKHRYAPH (68 aa)) are disordered.

In terms of assembly, efficient DNA binding requires dimerization with another bHLH protein.

Its subcellular location is the nucleus. Its function is as follows. Transcriptional regulator. Involved in neuronal differentiation. Activates transcription by binding to the E box (5'-CANNTG-3'). This chain is Neurogenin-2 (NEUROG2), found in Homo sapiens (Human).